Reading from the N-terminus, the 476-residue chain is Tubulointerstitial nephritis antigen (476 aa).

An N-linked (GlcNAc...) asparagine glycan is attached at Asn38. In terms of domain architecture, SMB spans 59 to 107; that stretch reads NFGCCEDRDDGCVTEFYAANALCYCDKFCDRENSDCCPDYKSFCREEKE. 6 disulfide bridges follow: Cys63/Cys70, Cys70/Cys102, Cys81/Cys83, Cys81/Cys95, Cys87/Cys94, and Cys95/Cys102. Residues Asn175, Asn314, Asn360, and Asn455 are each glycosylated (N-linked (GlcNAc...) asparagine).

This sequence belongs to the peptidase C1 family. It has been suggested that the active SMB domain may be permitted considerable disulfide bond heterogeneity or variability, thus 2 alternate disulfide patterns based on 3D structures are described with 1 disulfide bond conserved in both. As to expression, expressed in the kidney cortex, small intestine and cornea.

The protein localises to the secreted. It localises to the extracellular space. The protein resides in the extracellular matrix. It is found in the basement membrane. Its function is as follows. Mediates adhesion of proximal tubule epithelial cells via integrins alpha3-beta1 and alphaV-beta3. This is a non catalytic peptidase C1 family protein. The protein is Tubulointerstitial nephritis antigen (TINAG) of Homo sapiens (Human).